Consider the following 162-residue polypeptide: Transcription elongation factor GreA (162 aa).

A coiled-coil region spans residues 46–77 (RENAEYKAAREEQTRLNNMVTRLQEEIERAQV).

It belongs to the GreA/GreB family.

Its function is as follows. Necessary for efficient RNA polymerase transcription elongation past template-encoded arresting sites. The arresting sites in DNA have the property of trapping a certain fraction of elongating RNA polymerases that pass through, resulting in locked ternary complexes. Cleavage of the nascent transcript by cleavage factors such as GreA or GreB allows the resumption of elongation from the new 3'terminus. GreA releases sequences of 2 to 3 nucleotides. The chain is Transcription elongation factor GreA from Treponema pallidum (strain Nichols).